The following is a 381-amino-acid chain: Erythronate-4-phosphate dehydrogenase (381 aa).

Serine 45 and threonine 66 together coordinate substrate. NAD(+) is bound by residues aspartate 146, threonine 174, alanine 205–arginine 207, and aspartate 231. The active site involves arginine 207. Glutamate 236 is a catalytic residue. Histidine 253 functions as the Proton donor in the catalytic mechanism. Glycine 256 contributes to the NAD(+) binding site. Position 257 (tyrosine 257) interacts with substrate.

It belongs to the D-isomer specific 2-hydroxyacid dehydrogenase family. PdxB subfamily. In terms of assembly, homodimer.

The protein localises to the cytoplasm. The enzyme catalyses 4-phospho-D-erythronate + NAD(+) = (R)-3-hydroxy-2-oxo-4-phosphooxybutanoate + NADH + H(+). Its pathway is cofactor biosynthesis; pyridoxine 5'-phosphate biosynthesis; pyridoxine 5'-phosphate from D-erythrose 4-phosphate: step 2/5. Functionally, catalyzes the oxidation of erythronate-4-phosphate to 3-hydroxy-2-oxo-4-phosphonooxybutanoate. The chain is Erythronate-4-phosphate dehydrogenase from Stutzerimonas stutzeri (strain A1501) (Pseudomonas stutzeri).